Consider the following 248-residue polypeptide: UDP-2,3-diacylglucosamine hydrolase (248 aa).

Mn(2+) contacts are provided by Asp7, His9, Asp40, Asn78, and His113. 78 to 79 (NR) is a binding site for substrate. The substrate site is built by Asp121, Ser159, Thr163, Lys166, and His194. Mn(2+)-binding residues include His194 and His196.

It belongs to the LpxH family. The cofactor is Mn(2+).

It is found in the cell inner membrane. The enzyme catalyses UDP-2-N,3-O-bis[(3R)-3-hydroxytetradecanoyl]-alpha-D-glucosamine + H2O = 2-N,3-O-bis[(3R)-3-hydroxytetradecanoyl]-alpha-D-glucosaminyl 1-phosphate + UMP + 2 H(+). It functions in the pathway glycolipid biosynthesis; lipid IV(A) biosynthesis; lipid IV(A) from (3R)-3-hydroxytetradecanoyl-[acyl-carrier-protein] and UDP-N-acetyl-alpha-D-glucosamine: step 4/6. Hydrolyzes the pyrophosphate bond of UDP-2,3-diacylglucosamine to yield 2,3-diacylglucosamine 1-phosphate (lipid X) and UMP by catalyzing the attack of water at the alpha-P atom. Involved in the biosynthesis of lipid A, a phosphorylated glycolipid that anchors the lipopolysaccharide to the outer membrane of the cell. In Pseudomonas savastanoi pv. phaseolicola (strain 1448A / Race 6) (Pseudomonas syringae pv. phaseolicola (strain 1448A / Race 6)), this protein is UDP-2,3-diacylglucosamine hydrolase.